A 264-amino-acid chain; its full sequence is Intermembrane phospholipid transport system ATP-binding protein MlaF (264 aa).

Positions 6–242 (IEVKNLTFKR…QDLRVVQFLK (237 aa)) constitute an ABC transporter domain. 38–45 (GPSGIGKT) serves as a coordination point for ATP.

Belongs to the ABC transporter superfamily. MlaF family. As to quaternary structure, the complex is composed of two ATP-binding proteins (MlaF), two transmembrane proteins (MlaE), two cytoplasmic solute-binding proteins (MlaB) and six periplasmic solute-binding proteins (MlaD).

Its subcellular location is the cell inner membrane. Functionally, part of the ABC transporter complex MlaFEDB, which is involved in a phospholipid transport pathway that maintains lipid asymmetry in the outer membrane by retrograde trafficking of phospholipids from the outer membrane to the inner membrane. Responsible for energy coupling to the transport system. The chain is Intermembrane phospholipid transport system ATP-binding protein MlaF from Haemophilus influenzae (strain ATCC 51907 / DSM 11121 / KW20 / Rd).